The chain runs to 822 residues: Dextranase (822 aa).

A signal peptide spans 1-38 (MTVNLTLQHASEIIGQDNVDLTLAAGASAKVSNLTVAS). Disordered regions lie at residues 607-669 (EPVT…VDEL) and 683-788 (ETAH…ETTS). Positions 619–636 (NTVTSEASSETAKSENTT) are enriched in low complexity. Residues 693–705 (SVSNTDQGTVASD) are compositionally biased toward polar residues. Low complexity predominate over residues 706-761 (SITTPASEAASTAASTVSSEVSESVTVSSEPSETENSSEASTSESATPTTTAISES). Residues 771–788 (LTESESQASTSLVSETTS) are compositionally biased toward polar residues.

Belongs to the glycosyl hydrolase 66 family.

It carries out the reaction Endohydrolysis of (1-&gt;6)-alpha-D-glucosidic linkages in dextran.. This chain is Dextranase (dex), found in Streptococcus salivarius.